Here is a 1565-residue protein sequence, read N- to C-terminus: Synemin (1565 aa).

The tract at residues 1 to 10 (MLSWRLQTGP) is head. The segment at 11-49 (EKAELQELNARLYDYVCRVRELERENLLLEEELRGRRGR) is coil 1A. The interaction with DMD and UTRN stretch occupies residues 11–320 (EKAELQELNA…YRALLEGESN (310 aa)). The region spanning 11–322 (EKAELQELNA…ALLEGESNPE (312 aa)) is the IF rod domain. The segment at 50 to 58 (EGLWAEGQA) is linker 1. Residues 59-163 (RCAEEARSLR…ELRARAASLT (105 aa)) are coil 1B. The interval 164-186 (MHFRARATGPAAPPPRLREVHDS) is linker 12. Residues 187-300 (YALLVAESWR…LRDYQDLLQV (114 aa)) form a coil 2 region. The segment at 301-1565 (KTGLSLEVAT…EEEENDGHWF (1265 aa)) is tail. A disordered region spans residues 401-421 (SGYSSSATTQQENSYGKAVSS). The segment covering 402–421 (GYSSSATTQQENSYGKAVSS) has biased composition (polar residues). Serine 429 carries the post-translational modification Phosphoserine. Residues 472–609 (YRDRRDKVAA…VKDAGGGTGR (138 aa)) form a disordered region. The segment covering 498–577 (KKTEVKATRE…KEKSVREREV (80 aa)) has biased composition (basic and acidic residues). Residues threonine 598 and threonine 651 each carry the phosphothreonine modification. Serine 653 and serine 777 each carry phosphoserine. A compositionally biased stretch (basic and acidic residues) spans 1019–1040 (LSKDEASEMEKAVESVVRESLS). Positions 1019–1060 (LSKDEASEMEKAVESVVRESLSRQRSPAPGSPDEEGGAEAPA) are disordered. Phosphoserine occurs at positions 1044, 1049, 1077, 1087, 1181, and 1184. Residues 1080–1105 (SEVAGGASHSSGQRTPQGPVSATVEV) form a disordered region. Residues 1087 to 1105 (SHSSGQRTPQGPVSATVEV) show a composition bias toward polar residues. The tract at residues 1152–1463 (VSAGGDLSQA…GPKETSFTFQ (312 aa)) is interaction with TLN1 and VCL. 2 disordered regions span residues 1198-1221 (EAWG…GRHS) and 1332-1415 (QLGE…ETSE). The segment at 1244–1563 (GKVGDYFATE…DNEEEENDGH (320 aa)) is interaction with DMD and UTRN. Residues 1354-1379 (ATHSHTSGRQTVMTEKSTFQSVVSES) show a composition bias toward polar residues. A Phosphoserine modification is found at serine 1435. Arginine 1487 is subject to Omega-N-methylarginine. The disordered stretch occupies residues 1505–1525 (FKASAGEGDQAHREQGKEQAM). The segment covering 1513 to 1525 (DQAHREQGKEQAM) has biased composition (basic and acidic residues).

It belongs to the intermediate filament family. As to quaternary structure, interacts with GFAP and VIM. Isoform 1 interacts with TLN1 and VCL. Isoform 2 interacts with DES and DTNA. Isoform 1 and isoform 2 interact with DMD and UTRN. Isoform 2 is strongly detected in adult heart, fetal skeletal muscles and fetal heart. Isoform 1 is weakly detected in fetal heart and also in fetal skeletal muscle. Isoform 1 and isoform 2 are detected in adult bladder (at protein level). The mRNA is predominantly expressed in heart and muscle with some expression in brain which may be due to tissue-specific isoforms.

Its subcellular location is the cytoplasm. It is found in the cytoskeleton. The protein localises to the cell junction. It localises to the adherens junction. Its function is as follows. Type-VI intermediate filament (IF) which plays an important cytoskeletal role within the muscle cell cytoskeleton. It forms heteromeric IFs with desmin and/or vimentin, and via its interaction with cytoskeletal proteins alpha-dystrobrevin, dystrophin, talin-1, utrophin and vinculin, is able to link these heteromeric IFs to adherens-type junctions, such as to the costameres, neuromuscular junctions, and myotendinous junctions within striated muscle cells. This chain is Synemin, found in Homo sapiens (Human).